The primary structure comprises 399 residues: Beta sliding clamp (399 aa).

The protein belongs to the beta sliding clamp family. Forms a ring-shaped head-to-tail homodimer around DNA which binds and tethers DNA polymerases and other proteins to the DNA. The DNA replisome complex has a single clamp-loading complex (3 tau and 1 each of delta, delta', psi and chi subunits) which binds 3 Pol III cores (1 core on the leading strand and 2 on the lagging strand) each with a beta sliding clamp dimer. Additional proteins in the replisome are other copies of gamma, psi and chi, Ssb, DNA helicase and RNA primase.

It is found in the cytoplasm. Confers DNA tethering and processivity to DNA polymerases and other proteins. Acts as a clamp, forming a ring around DNA (a reaction catalyzed by the clamp-loading complex) which diffuses in an ATP-independent manner freely and bidirectionally along dsDNA. Initially characterized for its ability to contact the catalytic subunit of DNA polymerase III (Pol III), a complex, multichain enzyme responsible for most of the replicative synthesis in bacteria; Pol III exhibits 3'-5' exonuclease proofreading activity. The beta chain is required for initiation of replication as well as for processivity of DNA replication. This chain is Beta sliding clamp (dnaN), found in Mycobacterium leprae (strain TN).